A 314-amino-acid chain; its full sequence is tRNA pseudouridine synthase B (314 aa).

Position 43 (His-43) interacts with substrate. Asp-48 acts as the Nucleophile in catalysis. Positions 76, 179, and 200 each coordinate substrate.

The protein belongs to the pseudouridine synthase TruB family. Type 1 subfamily.

The enzyme catalyses uridine(55) in tRNA = pseudouridine(55) in tRNA. Functionally, responsible for synthesis of pseudouridine from uracil-55 in the psi GC loop of transfer RNAs. In Shigella dysenteriae serotype 1 (strain Sd197), this protein is tRNA pseudouridine synthase B.